The sequence spans 78 residues: Conotoxin TsMSGL-13 (78 aa).

The N-terminal stretch at 1–24 (MSGLGIMVLTLLLFMFMATSHQDA) is a signal peptide. The propeptide occupies 25 to 44 (GEKQATQRDAINVRRRRSIT). Disulfide bonds link Cys-51/Cys-63, Cys-55/Cys-72, and Cys-62/Cys-76. Position 77 is a phenylalanine amide (Phe-77).

It belongs to the conotoxin O3 superfamily. As to expression, expressed by the venom duct.

The protein localises to the secreted. The chain is Conotoxin TsMSGL-13 from Conus tessulatus (Tessellate cone).